A 636-amino-acid polypeptide reads, in one-letter code: Golgin subfamily A member 8F (636 aa).

2 disordered regions span residues 1–72 (MAEE…SATL) and 107–127 (NKQV…KQKA). The span at 38–50 (TNGSIHETATSGG) shows a compositional bias: polar residues. Coiled coils occupy residues 93–148 (VSQL…LNTD), 211–263 (LEQS…MSQE), and 306–412 (EVEL…QQKQ). Over residues 109-127 (QVEHQLEEEKKANNEKQKA) the composition is skewed to basic and acidic residues. 4 disordered regions span residues 344 to 364 (LREQ…QEER), 422 to 449 (ALPG…SIPQ), 496 to 537 (PITK…GVAA), and 588 to 612 (PVQG…QDHQ). The segment covering 429 to 441 (GGGHLDSEGEEAP) has biased composition (basic and acidic residues). The span at 509 to 522 (PGGGHHQAGPGQGG) shows a compositional bias: gly residues.

It belongs to the GOLGA8 family.

The protein is Golgin subfamily A member 8F of Homo sapiens (Human).